Consider the following 117-residue polypeptide: Large ribosomal subunit protein bL20c (117 aa).

This sequence belongs to the bacterial ribosomal protein bL20 family.

The protein resides in the plastid. It is found in the chloroplast. In terms of biological role, binds directly to 23S ribosomal RNA and is necessary for the in vitro assembly process of the 50S ribosomal subunit. It is not involved in the protein synthesizing functions of that subunit. The chain is Large ribosomal subunit protein bL20c from Nasturtium officinale (Watercress).